Here is a 507-residue protein sequence, read N- to C-terminus: Beta-glucosidase 13 (507 aa).

Residues 1-22 (MRTKYFSLLVFIIVLASNEVIA) form the signal peptide. Gln50 is an a beta-D-glucoside binding site. The N-linked (GlcNAc...) asparagine glycan is linked to Asn81. A beta-D-glucoside-binding positions include His154 and 199 to 200 (NE). Catalysis depends on Glu200, which acts as the Proton donor. Cys219 and Cys227 are joined by a disulfide. The N-linked (GlcNAc...) asparagine glycan is linked to Asn226. Tyr344 provides a ligand contact to a beta-D-glucoside. Asn358 carries an N-linked (GlcNAc...) asparagine glycan. A beta-D-glucoside is bound by residues Glu414, Trp459, 466 to 467 (EW), and Phe475. Residue Glu414 is the Nucleophile of the active site.

The protein belongs to the glycosyl hydrolase 1 family.

It carries out the reaction Hydrolysis of terminal, non-reducing beta-D-glucosyl residues with release of beta-D-glucose.. This Arabidopsis thaliana (Mouse-ear cress) protein is Beta-glucosidase 13.